The following is a 353-amino-acid chain: MTTDTPPPKPGLTYAEAGVDIDAGNTLVDRIKPAAKATSRPGVMSGLGGFGALFDLRAAGYADPVLVAATDGVGTKLRIAIDTGHVDTIGIDLVAMCVNDLVCQGAEPLLFLDYFATGKLDVAEAATIVEGIARGCATSGCALIGGETAEMPGMYAKGDFDLAGFAVGAMERGGALPANVAAGDMILGLASDGVHSNGYSLVRRIVERSGLGWGDPAPFEGRTLGAALLTPTRLYVQPALAAIRAGGVHGLAHVTGGGLTENLPRVLPEGLGIEINLGAWELPPVFRWLAAEGGLDEAELLKTFNAGIGMALIVAPDRAEALADLLAGAGERVAVIGHVTEGAGAVHYRGTLL.

The protein belongs to the AIR synthase family.

The protein resides in the cytoplasm. It catalyses the reaction 2-formamido-N(1)-(5-O-phospho-beta-D-ribosyl)acetamidine + ATP = 5-amino-1-(5-phospho-beta-D-ribosyl)imidazole + ADP + phosphate + H(+). The protein operates within purine metabolism; IMP biosynthesis via de novo pathway; 5-amino-1-(5-phospho-D-ribosyl)imidazole from N(2)-formyl-N(1)-(5-phospho-D-ribosyl)glycinamide: step 2/2. The protein is Phosphoribosylformylglycinamidine cyclo-ligase of Dinoroseobacter shibae (strain DSM 16493 / NCIMB 14021 / DFL 12).